A 621-amino-acid chain; its full sequence is Ubiquitin carboxyl-terminal hydrolase MINDY-2 (621 aa).

Disordered regions lie at residues 1-106 (MESS…RGQY) and 119-179 (VGHE…LESF). Serine 94 is subject to Phosphoserine. Residues 145 to 163 (AAGSEEPSSAGGLSSSCSD) show a composition bias toward low complexity. Cysteine 266 serves as the catalytic Nucleophile. The Proton acceptor role is filled by histidine 448. Residues 507 to 559 (GQQDQIDQDYLMALSLQQEQQSQEINWEQIPEGISDLELAKKLQEEEDRRASQ) form a ubiquitin-binding domain (UBD) region. The tract at residues 556-621 (RASQYYQEQE…EKEKNSCVIL (66 aa)) is disordered. A compositionally biased stretch (low complexity) spans 558-591 (SQYYQEQEQAAAAAAAASTQAQQGQPAQASPSSG). Residues 597-621 (SERKRKEPREKDKEKEKEKNSCVIL) show a composition bias toward basic and acidic residues.

It belongs to the MINDY deubiquitinase family. FAM63 subfamily.

The catalysed reaction is Thiol-dependent hydrolysis of ester, thioester, amide, peptide and isopeptide bonds formed by the C-terminal Gly of ubiquitin (a 76-residue protein attached to proteins as an intracellular targeting signal).. Functionally, hydrolase that can remove 'Lys-48'-linked conjugated ubiquitin from proteins. Binds to polyubiquitin chains of different linkage types, including 'Lys-6', 'Lys-11', 'Lys-29', 'Lys-33', 'Lys-48' and 'Lys-63'. May play a regulatory role at the level of protein turnover. The chain is Ubiquitin carboxyl-terminal hydrolase MINDY-2 from Homo sapiens (Human).